The sequence spans 286 residues: MACSRFEYVKSFEQDDSILPNVWIVIRIDGKKFHKFSKTHDFEKPNDENALNVMNAAATAVMQEFRDIVLAYGQSDEYSFVFRKETAAFKRRSAKLLTYVTSLFSSSYVMQWSKWMNLPLAYAPCFDGRVVLYPSEQNLKDYLSWRQADVHVNNLYNTAFWKLVLEKGLTNQQAEAKLRGTFSADKNELLFQEFGINYNNLPAMYRKGTILLRKRVILGEKSRQAVVPLHEDLISSQFWKEHTEILGKYVPGTYDAPQTFPRLVEMQINGKDDNEAEEPQNLAGTS.

The Mg(2+) site is built by Asp29, Gly30, and Asp76. GTP is bound by residues 29–34 and 75–76; these read DGKKFH and SD.

This sequence belongs to the tRNA(His) guanylyltransferase family. The cofactor is Mg(2+).

The enzyme catalyses a 5'-end ribonucleotide-tRNA(His) + GTP + ATP + H2O = a 5'-end phospho-guanosine-ribonucleotide-tRNA(His) + AMP + 2 diphosphate + H(+). In terms of biological role, adds a GMP to the 5'-end of tRNA(His) after transcription and RNase P cleavage. The chain is Probable tRNA(His) guanylyltransferase from Drosophila melanogaster (Fruit fly).